The primary structure comprises 221 residues: NAD(P)H-hydrate epimerase (221 aa).

Residues 10–211 (MQQYDQYTIN…DIGIYSPAEL (202 aa)) enclose the YjeF N-terminal domain. 58–62 (NNGGD) contributes to the (6S)-NADPHX binding site. Residues Asn59 and Asp121 each contribute to the K(+) site. Residues 125–131 (GIGLSKP) and Asp154 contribute to the (6S)-NADPHX site. K(+) is bound at residue Ser157.

This sequence belongs to the NnrE/AIBP family. It depends on K(+) as a cofactor.

The enzyme catalyses (6R)-NADHX = (6S)-NADHX. It catalyses the reaction (6R)-NADPHX = (6S)-NADPHX. In terms of biological role, catalyzes the epimerization of the S- and R-forms of NAD(P)HX, a damaged form of NAD(P)H that is a result of enzymatic or heat-dependent hydration. This is a prerequisite for the S-specific NAD(P)H-hydrate dehydratase to allow the repair of both epimers of NAD(P)HX. In Weissella koreensis (strain KACC 15510), this protein is NAD(P)H-hydrate epimerase.